A 784-amino-acid chain; its full sequence is MNPERSERIEIPVLPLRDVVVYPHMVIPLFVGREKSIRCLEAAMDHDKKIMLVAQKEASTDEPGINDLFSVGTVASILQMLKLPDATVKVLVEGLQRARISALSDNGDHFTAKAEYLTSPEIEEREQEVLVRTAINQFEGYIKLNKKIPPEVLTSLNSIDDAARLADTVAAHMPLKLSDKQSVLEMSDVDERLEYLMAMMESEIDLLQVEKRIRNRVKKQMEKSQREYYLNEQMKAIQKELGEMDDAPDENEALKRKIDAARMPKEAREKTEAELQKLKMMSPMSAEATVVRGYIDWMVQVPWNARSKVEKDLQKRRQTLDTDHFGLERVKDRILEYLAVQSRVSKIKGPILCLVGPPGVGKTSLGQSIAKATGRKYVRMALGGVRDEAEIRGHRRTYIGSMPGKLIQKMAKVGVKNPLFLLDEIDKMSSDMRGDPASALLEVLDPEQNIAFNDHYLEVDYDLSDVMFVATSNSMNIPAPLLDRMEVIRLSGYTEDEKLNIAKKHLLSKQIERNALKEHELIVDDSAIVGIIRYYTRERGVRSLERELSKLCRKAVKTLLMDKSVKHIEINADNLKDYLGVQRYDYGRADSENRVGQVTGLAWTEVGGDLLTIETACVPGKGKLTYTGSLGEVMQESIQAALTVVRARAEKLGINGDFYEKRDIHVHVPEGATPKDGPSAGIAMCTALVSCLTGNPVRADVAMTGEITLRGQVLPIGGLKEKLLAAHRGGIKTVLIPDENKRDLEEIPENVIADLDIHPVKRIEEVLALALQNAPYGMQVASVK.

The 194-residue stretch at 11 to 204 (IPVLPLRDVV…YLMAMMESEI (194 aa)) folds into the Lon N-terminal domain. ATP is bound at residue 356-363 (GPPGVGKT). The 182-residue stretch at 592–773 (ENRVGQVTGL…EEVLALALQN (182 aa)) folds into the Lon proteolytic domain. Active-site residues include Ser679 and Lys722.

The protein belongs to the peptidase S16 family. Homohexamer. Organized in a ring with a central cavity.

It localises to the cytoplasm. It catalyses the reaction Hydrolysis of proteins in presence of ATP.. In terms of biological role, ATP-dependent serine protease that mediates the selective degradation of mutant and abnormal proteins as well as certain short-lived regulatory proteins. Required for cellular homeostasis and for survival from DNA damage and developmental changes induced by stress. Degrades polypeptides processively to yield small peptide fragments that are 5 to 10 amino acids long. Binds to DNA in a double-stranded, site-specific manner. The polypeptide is Lon protease (Erwinia amylovora (Fire blight bacteria)).